A 145-amino-acid chain; its full sequence is Superoxide dismutase [Cu-Zn] (145 aa).

Cu cation is bound by residues H37, H39, and H54. A disulfide bridge links C48 with C137. 4 residues coordinate Zn(2+): H54, H62, H71, and D74. H111 is a Cu cation binding site.

The protein belongs to the Cu-Zn superoxide dismutase family. Homodimer. It depends on Cu cation as a cofactor. The cofactor is Zn(2+).

The protein localises to the cytoplasm. It catalyses the reaction 2 superoxide + 2 H(+) = H2O2 + O2. Its function is as follows. Destroys radicals which are normally produced within the cells and which are toxic to biological systems. The sequence is that of Superoxide dismutase [Cu-Zn] from Drosophila busckii (Fruit fly).